The sequence spans 291 residues: Malolactic fermentation system transcriptional activator (291 aa).

Residues 1–60 (MSLNLRDLEYFYQLSKLRSFTNVAKHFRVSQPTISYAIKRLETYYDCDLFYKDSSHQVVD) form the HTH lysR-type domain. The H-T-H motif DNA-binding region spans 20–39 (FTNVAKHFRVSQPTISYAIK).

It belongs to the LysR transcriptional regulatory family.

It localises to the cytoplasm. Functionally, required for malolactic fermentation. It is most probably a transcriptional activator. The chain is Malolactic fermentation system transcriptional activator (mleR) from Lactococcus lactis subsp. lactis (strain IL1403) (Streptococcus lactis).